Here is a 126-residue protein sequence, read N- to C-terminus: Alpha-lactalbumin (126 aa).

One can recognise a C-type lysozyme domain in the interval 1-126; it reads KVFEKCELSQ…CIADLDQWKC (126 aa). Intrachain disulfides connect Cys-6/Cys-126, Cys-30/Cys-117, Cys-63/Cys-82, and Cys-78/Cys-96. An N-linked (GlcNAc...) asparagine glycan is attached at Asn-47. Residues Lys-84, Asp-87, Asp-89, Asp-92, and Asp-93 each contribute to the Ca(2+) site.

The protein belongs to the glycosyl hydrolase 22 family. As to quaternary structure, lactose synthase (LS) is a heterodimer of a catalytic component, beta1,4-galactosyltransferase (beta4Gal-T1) and a regulatory component, alpha-lactalbumin (LA). Mammary gland specific. Secreted in milk.

The protein resides in the secreted. In terms of biological role, regulatory subunit of lactose synthase, changes the substrate specificity of galactosyltransferase in the mammary gland making glucose a good acceptor substrate for this enzyme. This enables LS to synthesize lactose, the major carbohydrate component of milk. In other tissues, galactosyltransferase transfers galactose onto the N-acetylglucosamine of the oligosaccharide chains in glycoproteins. This chain is Alpha-lactalbumin (LALBA), found in Tachyglossus aculeatus aculeatus (Southeast Australian short-beaked echidna).